We begin with the raw amino-acid sequence, 451 residues long: MTENEQIFWNRVLELAQSQLKQATYEFFVHDARLLKVDKHIATIYLDQMKELFWEKNLKDVILTAGFEVYNAQISVDYVFEEDLMIEQNQTKINQKPKQQALNSLPTVTSDLNPKYSFENFIQGDENRWAVAASIAVANTPGTTYNPLFIWGGPGLGKTHLLNAIGNSVLLENPNARIKYITAENFINEFVIHIRLDTMDELKEKFRNLDLLLIDDIQSLAKKTLSGTQEEFFNTFNALHNNNKQIVLTSDRTPDHLNDLEDRLVTRFKWGLTVNITPPDFETRVAILTNKIQEYNFIFPQDTIEYLAGQFDSNVRDLEGALKDISLVANFKQIDTITVDIAAEAIRARKQDGPKMTVIPIEEIQTQVGKFYGVTVKEIKATKRTQNIVLARQVAMFLAREMTDNSLPKIGKEFGGRDHSTVLHAYNKIKNMISQDESLRIEIETIKNKIK.

The segment at Met-1–Asp-77 is domain I, interacts with DnaA modulators. Residues Asp-77–Ser-110 form a domain II region. A domain III, AAA+ region region spans residues Asp-111–Ala-329. Residues Gly-155, Gly-157, Lys-158, and Thr-159 each coordinate ATP. A domain IV, binds dsDNA region spans residues Asn-330–Lys-451.

It belongs to the DnaA family. In terms of assembly, oligomerizes as a right-handed, spiral filament on DNA at oriC.

The protein localises to the cytoplasm. Its function is as follows. Plays an essential role in the initiation and regulation of chromosomal replication. ATP-DnaA binds to the origin of replication (oriC) to initiate formation of the DNA replication initiation complex once per cell cycle. Binds the DnaA box (a 9 base pair repeat at the origin) and separates the double-stranded (ds)DNA. Forms a right-handed helical filament on oriC DNA; dsDNA binds to the exterior of the filament while single-stranded (ss)DNA is stabiized in the filament's interior. The ATP-DnaA-oriC complex binds and stabilizes one strand of the AT-rich DNA unwinding element (DUE), permitting loading of DNA polymerase. After initiation quickly degrades to an ADP-DnaA complex that is not apt for DNA replication. Binds acidic phospholipids. This chain is Chromosomal replication initiator protein DnaA, found in Streptococcus pyogenes serotype M4 (strain MGAS10750).